Here is a 270-residue protein sequence, read N- to C-terminus: 4-hydroxy-tetrahydrodipicolinate reductase (270 aa).

NAD(+) contacts are provided by residues 9–14 and Glu-35; that span reads GAGGRM. Arg-36 contacts NADP(+). NAD(+)-binding positions include 99–101 and 123–126; these read GTT and ASNF. Residue His-156 is the Proton donor/acceptor of the active site. Residue His-157 coordinates (S)-2,3,4,5-tetrahydrodipicolinate. The Proton donor role is filled by Lys-160. 166 to 167 is a binding site for (S)-2,3,4,5-tetrahydrodipicolinate; it reads GT.

Belongs to the DapB family.

It is found in the cytoplasm. The enzyme catalyses (S)-2,3,4,5-tetrahydrodipicolinate + NAD(+) + H2O = (2S,4S)-4-hydroxy-2,3,4,5-tetrahydrodipicolinate + NADH + H(+). It catalyses the reaction (S)-2,3,4,5-tetrahydrodipicolinate + NADP(+) + H2O = (2S,4S)-4-hydroxy-2,3,4,5-tetrahydrodipicolinate + NADPH + H(+). Its pathway is amino-acid biosynthesis; L-lysine biosynthesis via DAP pathway; (S)-tetrahydrodipicolinate from L-aspartate: step 4/4. In terms of biological role, catalyzes the conversion of 4-hydroxy-tetrahydrodipicolinate (HTPA) to tetrahydrodipicolinate. This is 4-hydroxy-tetrahydrodipicolinate reductase from Haemophilus influenzae (strain 86-028NP).